The chain runs to 384 residues: MPPIELSQTQFEQHFGYASQQTVFAPGRVNIIGEHTDYNDGFVMPCAINYGMSVSFAKRDDSIWRVYAIDINETDAFDIKKEIPQSEDKWKNYVRGVVKYIQERCPEFIQGADIAMTSDVPMSSGLSSSAALEISIGKTCQVLGNLPISLAEIALIGQRAENKFVGANCGNMDQLTSALGQKDHLVMIDCRSLDISPTPVPQGYFIAIINSNVKHDLVTGEYNSRRQECEFAAQFFGVKALRDVSPEQFIERAAELQQLNELAYKRAKHVISENHRVLEAVEALKANDMQKLGVLMGESHDSMRDDFEITIPEIDYLVELAQVAIGKNGGARMTGGGFGGCIICLVPNEKVEALRKLIAENYQKQTGIQETFYVCTASDGVRVV.

A substrate-binding site is contributed by 34–37; that stretch reads EHTD. 123–129 is a binding site for ATP; it reads SSGLSSS. 2 residues coordinate Mg(2+): S129 and E161. D173 serves as the catalytic Proton acceptor. Y222 is a binding site for substrate.

It belongs to the GHMP kinase family. GalK subfamily.

It is found in the cytoplasm. It catalyses the reaction alpha-D-galactose + ATP = alpha-D-galactose 1-phosphate + ADP + H(+). The protein operates within carbohydrate metabolism; galactose metabolism. In terms of biological role, catalyzes the transfer of the gamma-phosphate of ATP to D-galactose to form alpha-D-galactose-1-phosphate (Gal-1-P). The polypeptide is Galactokinase (Glaesserella parasuis serovar 5 (strain SH0165) (Haemophilus parasuis)).